The primary structure comprises 501 residues: MSIFLCFLLLLLLLLVTIIFTRKSQSSKLKLPPGPPKLPIIGNLHYLNGLPHKCLLNLWKIHGPVMQLQLGYVPLVVISSNQAAEEVLKTHDLDCCSRPETIASKTISYNFKDIGFAPYGEEWRALRKLAVIELFSLKKFNSFRYIREEENDLLVKKLSEASEKQSPVNLKKALFTLSASIVCRLAFGQNLHESEFIDEDSMEDLASRSEKIQAKFAFSNFFPGGWILDKITGQSKSLNEIFADLDGFFNQVLDDHLKPGRKVLETPDVVDVMIDMMNKQSQDGSFKLTTDHIKGIISDIFLAGVNTSATTILWAMTELIRNPRVMKKVQDEVRTVLGEKRDRITEQDLNQLNYFKLVIKETFRLHPAAPLLLPREAMAKIKIQGYDIPEKTQIMVNVYAIGRDPDLWENPEEFKPERFVDSSVDYRGLNFELLPFGSGRRICPGMTMGIATVELGLLNLLYFFDWGLPEGRTVKDIDLEEEGAIIIGKKVSLELVPTRRQ.

A helical transmembrane segment spans residues 1-21 (MSIFLCFLLLLLLLLVTIIFT). Cys443 is a heme binding site.

This sequence belongs to the cytochrome P450 family. Requires heme as cofactor.

The protein resides in the membrane. In Arabidopsis thaliana (Mouse-ear cress), this protein is Cytochrome P450 71B23 (CYP71B23).